Consider the following 446-residue polypeptide: Putative F-box protein At1g32660 (446 aa).

Composition is skewed to basic and acidic residues over residues Met-1–Ser-12 and Asn-43–Lys-57. Positions Met-1–Lys-57 are disordered. The F-box domain occupies Lys-57–Ser-107.

The chain is Putative F-box protein At1g32660 from Arabidopsis thaliana (Mouse-ear cress).